The sequence spans 366 residues: Mitogen-activated protein kinase 13 (366 aa).

The region spanning 25–308 is the Protein kinase domain; sequence YVSLTHIGSG…ASQALAHPFF (284 aa). An ATP-binding site is contributed by 31–39; it reads IGSGAYGSV. Position 47 is a phosphoserine (S47). K54 contributes to the ATP binding site. The active-site Proton acceptor is the D150. Residue T180 is modified to Phosphothreonine; by MAP2K3, MAP2K4, MAP2K6 and MAP2K7. The TXY motif lies at 180-182; the sequence is TGY. The residue at position 182 (Y182) is a Phosphotyrosine; by MAP2K3, MAP2K4, MAP2K6 and MAP2K7. S350 is subject to Phosphoserine.

Belongs to the protein kinase superfamily. CMGC Ser/Thr protein kinase family. MAP kinase subfamily. Interacts with MAPK8IP2. Mg(2+) is required as a cofactor. In terms of processing, dually phosphorylated on Thr-180 and Tyr-182 by MAP2K3/MKK3, MAP2K4/MKK4, MAP2K6/MKK6 and MAP2K7/MKK7, which activates the enzyme. Dephosphorylated by dual specificity phosphatase DUSP1.

It catalyses the reaction L-seryl-[protein] + ATP = O-phospho-L-seryl-[protein] + ADP + H(+). The enzyme catalyses L-threonyl-[protein] + ATP = O-phospho-L-threonyl-[protein] + ADP + H(+). Activated by phosphorylation on threonine and tyrosine by dual specificity kinases, MAP2K3/MKK3 MAP2K6/MKK6, MAP2K4/MKK4 and MAP2K7/MKK7. Activation by ultraviolet radiation, hyperosmotic shock, anisomycin or by TNF-alpha is mediated by MAP2K3/MKK3. Inhibited by dual specificity phosphatase DUSP1. In terms of biological role, serine/threonine kinase which acts as an essential component of the MAP kinase signal transduction pathway. MAPK13 is one of the four p38 MAPKs which play an important role in the cascades of cellular responses evoked by extracellular stimuli such as pro-inflammatory cytokines or physical stress leading to direct activation of transcription factors such as ELK1 and ATF2. Accordingly, p38 MAPKs phosphorylate a broad range of proteins and it has been estimated that they may have approximately 200 to 300 substrates each. MAPK13 is one of the less studied p38 MAPK isoforms. Some of the targets are downstream kinases such as MAPKAPK2, which are activated through phosphorylation and further phosphorylate additional targets. Plays a role in the regulation of protein translation by phosphorylating and inactivating EEF2K. Involved in cytoskeletal remodeling through phosphorylation of MAPT and STMN1. Mediates UV irradiation induced up-regulation of the gene expression of CXCL14. Plays an important role in the regulation of epidermal keratinocyte differentiation, apoptosis and skin tumor development. Phosphorylates the transcriptional activator MYB in response to stress which leads to rapid MYB degradation via a proteasome-dependent pathway. MAPK13 also phosphorylates and down-regulates PRKD1 during regulation of insulin secretion in pancreatic beta cells. The chain is Mitogen-activated protein kinase 13 (MAPK13) from Bos taurus (Bovine).